The following is a 510-amino-acid chain: Pantetheinase (510 aa).

The N-terminal stretch at 1-22 is a signal peptide; that stretch reads MIMSQLLNYVAVLFFCVSRASS. A CN hydrolase domain is found at 31 to 307; that stretch reads YEHAVILPNA…GKLLLAQLDS (277 aa). N-linked (GlcNAc...) asparagine glycosylation occurs at asparagine 39. Glutamate 80 (proton acceptor) is an active-site residue. 2 N-linked (GlcNAc...) asparagine glycosylation sites follow: asparagine 87 and asparagine 147. The active-site Proton donor is the lysine 179. Asparagine 201 carries an N-linked (GlcNAc...) asparagine glycan. The active-site Nucleophile is the cysteine 212. N-linked (GlcNAc...) asparagine glycans are attached at residues asparagine 316 and asparagine 354. Aspartate 492 carries the GPI-anchor amidated aspartate lipid modification. A propeptide spans 493–510 (removed in mature form); it reads LTTQALRLNPKTDAWKSK. Threonine 504 carries O-linked (GalNAc...) threonine glycosylation.

This sequence belongs to the carbon-nitrogen hydrolase superfamily. BTD/VNN family. Monomer.

Its subcellular location is the cell membrane. It catalyses the reaction (R)-pantetheine + H2O = cysteamine + (R)-pantothenate. Functionally, amidohydrolase that hydrolyzes specifically one of the carboamide linkages in D-pantetheine thus recycling pantothenic acid (vitamin B5) and releasing cysteamine. This is Pantetheinase (VNN1) from Bos taurus (Bovine).